The sequence spans 61 residues: Large ribosomal subunit protein uL30 (61 aa).

It belongs to the universal ribosomal protein uL30 family. In terms of assembly, part of the 50S ribosomal subunit.

The polypeptide is Large ribosomal subunit protein uL30 (Dichelobacter nodosus (strain VCS1703A)).